The chain runs to 503 residues: ATP synthase subunit alpha (503 aa).

Gly-170–Thr-177 is a binding site for ATP.

This sequence belongs to the ATPase alpha/beta chains family. As to quaternary structure, F-type ATPases have 2 components, CF(1) - the catalytic core - and CF(0) - the membrane proton channel. CF(1) has five subunits: alpha(3), beta(3), gamma(1), delta(1), epsilon(1). CF(0) has three main subunits: a(1), b(2) and c(9-12). The alpha and beta chains form an alternating ring which encloses part of the gamma chain. CF(1) is attached to CF(0) by a central stalk formed by the gamma and epsilon chains, while a peripheral stalk is formed by the delta and b chains.

Its subcellular location is the cell inner membrane. The catalysed reaction is ATP + H2O + 4 H(+)(in) = ADP + phosphate + 5 H(+)(out). In terms of biological role, produces ATP from ADP in the presence of a proton gradient across the membrane. The alpha chain is a regulatory subunit. The chain is ATP synthase subunit alpha from Helicobacter pylori (strain HPAG1).